The primary structure comprises 406 residues: Phosphopentomutase (406 aa).

Mn(2+) contacts are provided by Asp-10, Asp-305, His-310, Asp-346, His-347, and His-358.

Belongs to the phosphopentomutase family. Mn(2+) serves as cofactor.

It localises to the cytoplasm. The catalysed reaction is 2-deoxy-alpha-D-ribose 1-phosphate = 2-deoxy-D-ribose 5-phosphate. The enzyme catalyses alpha-D-ribose 1-phosphate = D-ribose 5-phosphate. The protein operates within carbohydrate degradation; 2-deoxy-D-ribose 1-phosphate degradation; D-glyceraldehyde 3-phosphate and acetaldehyde from 2-deoxy-alpha-D-ribose 1-phosphate: step 1/2. Its function is as follows. Isomerase that catalyzes the conversion of deoxy-ribose 1-phosphate (dRib-1-P) and ribose 1-phosphate (Rib-1-P) to deoxy-ribose 5-phosphate (dRib-5-P) and ribose 5-phosphate (Rib-5-P), respectively. The protein is Phosphopentomutase of Allorhizobium ampelinum (strain ATCC BAA-846 / DSM 112012 / S4) (Agrobacterium vitis (strain S4)).